Reading from the N-terminus, the 375-residue chain is Putative prophage phiRv2 integrase (375 aa).

In terms of domain architecture, Core-binding (CB) spans 75 to 153 (APFGEYAEGW…LLRAIMQTAL (79 aa)). A Tyr recombinase domain is found at 175–364 (HKIRPATLDE…AKGRDREIAA (190 aa)). Residues Arg-209, His-316, Arg-319, and His-342 contribute to the active site. Tyr-351 (O-(3'-phospho-DNA)-tyrosine intermediate) is an active-site residue.

Belongs to the 'phage' integrase family.

Functionally, integrase is necessary for integration of the phage into the host genome by site-specific recombination. In conjunction with excisionase, integrase is also necessary for excision of the prophage from the host genome. The chain is Putative prophage phiRv2 integrase from Mycobacterium tuberculosis (strain CDC 1551 / Oshkosh).